Consider the following 840-residue polypeptide: UPF0508 protein SCY_2952 (840 aa).

The protein belongs to the UPF0508 family.

This Saccharomyces cerevisiae (strain YJM789) (Baker's yeast) protein is UPF0508 protein SCY_2952.